Here is a 96-residue protein sequence, read N- to C-terminus: Co-chaperonin GroES (96 aa).

It belongs to the GroES chaperonin family. Heptamer of 7 subunits arranged in a ring. Interacts with the chaperonin GroEL.

It is found in the cytoplasm. Its function is as follows. Together with the chaperonin GroEL, plays an essential role in assisting protein folding. The GroEL-GroES system forms a nano-cage that allows encapsulation of the non-native substrate proteins and provides a physical environment optimized to promote and accelerate protein folding. GroES binds to the apical surface of the GroEL ring, thereby capping the opening of the GroEL channel. This chain is Co-chaperonin GroES, found in Teredinibacter turnerae (strain ATCC 39867 / T7901).